A 1362-amino-acid chain; its full sequence is Dicer-like protein 2-2 (1362 aa).

The region spanning 30–197 (MLNESLKRNL…EIVESNLGSI (168 aa)) is the Helicase ATP-binding domain. 43–50 (MPTGTGKT) provides a ligand contact to ATP. A DEAH box motif is present at residues 139 to 142 (DEAH). In terms of domain architecture, Helicase C-terminal spans 343-505 (LLDELSKAYR…KLQNAERRQI (163 aa)). The 95-residue stretch at 536-630 (AVGYLYNFCS…VPTQVSDHLE (95 aa)) folds into the Dicer dsRNA-binding fold domain. 2 RNase III domains span residues 889-1033 (AQIL…TDGG) and 1075-1258 (IVDM…IDSQ).

It belongs to the helicase family. Dicer subfamily.

Functionally, dicer-like endonuclease involved in cleaving double-stranded RNA in the RNA interference (RNAi) pathway. Produces 21 to 25 bp dsRNAs (siRNAs) which target the selective destruction of homologous RNAs leading to sequence-specific suppression of gene expression, called post-transcriptional gene silencing (PTGS). Part of a broad host defense response against viral infection and transposons. The sequence is that of Dicer-like protein 2-2 (dcl2-2) from Aspergillus niger (strain ATCC MYA-4892 / CBS 513.88 / FGSC A1513).